The sequence spans 148 residues: Large ribosomal subunit protein uL15 (148 aa).

Positions 1-28 are enriched in basic residues; that stretch reads MIRRRKKVRKLRGSHTHGWGCKKKHRGG. The interval 1–43 is disordered; that stretch reads MIRRRKKVRKLRGSHTHGWGCKKKHRGGGSKGGRGMAGTGKRK. A compositionally biased stretch (gly residues) spans 29-38; the sequence is GSKGGRGMAG.

This sequence belongs to the universal ribosomal protein uL15 family. Part of the 50S ribosomal subunit.

Its function is as follows. Binds to the 23S rRNA. The chain is Large ribosomal subunit protein uL15 from Thermococcus kodakarensis (strain ATCC BAA-918 / JCM 12380 / KOD1) (Pyrococcus kodakaraensis (strain KOD1)).